We begin with the raw amino-acid sequence, 177 residues long: Peptide methionine sulfoxide reductase MsrA (177 aa).

Cys11 is a catalytic residue.

It belongs to the MsrA Met sulfoxide reductase family.

It carries out the reaction L-methionyl-[protein] + [thioredoxin]-disulfide + H2O = L-methionyl-(S)-S-oxide-[protein] + [thioredoxin]-dithiol. It catalyses the reaction [thioredoxin]-disulfide + L-methionine + H2O = L-methionine (S)-S-oxide + [thioredoxin]-dithiol. Has an important function as a repair enzyme for proteins that have been inactivated by oxidation. Catalyzes the reversible oxidation-reduction of methionine sulfoxide in proteins to methionine. The chain is Peptide methionine sulfoxide reductase MsrA from Picrophilus torridus (strain ATCC 700027 / DSM 9790 / JCM 10055 / NBRC 100828 / KAW 2/3).